A 414-amino-acid polypeptide reads, in one-letter code: Serine/threonine transporter SstT (414 aa).

A run of 9 helical transmembrane segments spans residues Ile-19–Val-39, Phe-55–Ile-75, Ile-89–Phe-109, Ala-148–Leu-168, Ile-189–Leu-209, Leu-223–Val-243, Ile-297–Leu-317, Leu-323–Ala-343, and Leu-363–Val-383.

The protein belongs to the dicarboxylate/amino acid:cation symporter (DAACS) (TC 2.A.23) family.

Its subcellular location is the cell inner membrane. It catalyses the reaction L-serine(in) + Na(+)(in) = L-serine(out) + Na(+)(out). The enzyme catalyses L-threonine(in) + Na(+)(in) = L-threonine(out) + Na(+)(out). Involved in the import of serine and threonine into the cell, with the concomitant import of sodium (symport system). In Actinobacillus succinogenes (strain ATCC 55618 / DSM 22257 / CCUG 43843 / 130Z), this protein is Serine/threonine transporter SstT.